We begin with the raw amino-acid sequence, 833 residues long: Leucine--tRNA ligase (833 aa).

The short motif at 41–52 (PYPSGAGLHVGH) is the 'HIGH' region element. Residues 610 to 614 (KMSKS) carry the 'KMSKS' region motif. Lys-613 contacts ATP.

The protein belongs to the class-I aminoacyl-tRNA synthetase family.

It is found in the cytoplasm. It carries out the reaction tRNA(Leu) + L-leucine + ATP = L-leucyl-tRNA(Leu) + AMP + diphosphate. In Streptococcus pyogenes serotype M18 (strain MGAS8232), this protein is Leucine--tRNA ligase.